We begin with the raw amino-acid sequence, 159 residues long: 2-C-methyl-D-erythritol 2,4-cyclodiphosphate synthase (159 aa).

2 residues coordinate a divalent metal cation: Asp8 and His10. 4-CDP-2-C-methyl-D-erythritol 2-phosphate contacts are provided by residues 8-10 (DVH) and 34-35 (HS). His42 contacts a divalent metal cation. 4-CDP-2-C-methyl-D-erythritol 2-phosphate contacts are provided by residues 56–58 (DIG), 61–65 (FPDTD), 100–106 (AQAPKML), 132–135 (TTTE), Phe139, and Arg142.

The protein belongs to the IspF family. In terms of assembly, homotrimer. A divalent metal cation is required as a cofactor.

The catalysed reaction is 4-CDP-2-C-methyl-D-erythritol 2-phosphate = 2-C-methyl-D-erythritol 2,4-cyclic diphosphate + CMP. The protein operates within isoprenoid biosynthesis; isopentenyl diphosphate biosynthesis via DXP pathway; isopentenyl diphosphate from 1-deoxy-D-xylulose 5-phosphate: step 4/6. In terms of biological role, involved in the biosynthesis of isopentenyl diphosphate (IPP) and dimethylallyl diphosphate (DMAPP), two major building blocks of isoprenoid compounds. Catalyzes the conversion of 4-diphosphocytidyl-2-C-methyl-D-erythritol 2-phosphate (CDP-ME2P) to 2-C-methyl-D-erythritol 2,4-cyclodiphosphate (ME-CPP) with a corresponding release of cytidine 5-monophosphate (CMP). The protein is 2-C-methyl-D-erythritol 2,4-cyclodiphosphate synthase of Citrobacter koseri (strain ATCC BAA-895 / CDC 4225-83 / SGSC4696).